Reading from the N-terminus, the 362-residue chain is DNA replication and repair protein RecF (362 aa).

Residue 30–37 (GPNGSGKT) participates in ATP binding.

This sequence belongs to the RecF family.

It is found in the cytoplasm. The RecF protein is involved in DNA metabolism; it is required for DNA replication and normal SOS inducibility. RecF binds preferentially to single-stranded, linear DNA. It also seems to bind ATP. The polypeptide is DNA replication and repair protein RecF (Proteus mirabilis (strain HI4320)).